The primary structure comprises 229 residues: Cytochrome c oxidase subunit 2 (229 aa).

Residues 1 to 14 (MPTPNQTNFQDAAS) lie on the Mitochondrial intermembrane side of the membrane. A helical membrane pass occupies residues 15–45 (PLMEELTHFHDHTLMIVFMISLLVLYILLSM). The Mitochondrial matrix segment spans residues 46 to 59 (LSTKLTHTNTANAQ). Residues 60–87 (QAEMVWTILPAIILITIALPSLQILYMM) form a helical membrane-spanning segment. The Mitochondrial intermembrane segment spans residues 88–229 (DEINKPHMTI…DLWLAMIDTL (142 aa)). Residues H161, C196, E198, C200, H204, and M207 each contribute to the Cu cation site. A Mg(2+)-binding site is contributed by E198.

Belongs to the cytochrome c oxidase subunit 2 family. In terms of assembly, component of the cytochrome c oxidase (complex IV, CIV), a multisubunit enzyme composed of 14 subunits. The complex is composed of a catalytic core of 3 subunits MT-CO1, MT-CO2 and MT-CO3, encoded in the mitochondrial DNA, and 11 supernumerary subunits COX4I, COX5A, COX5B, COX6A, COX6B, COX6C, COX7A, COX7B, COX7C, COX8 and NDUFA4, which are encoded in the nuclear genome. The complex exists as a monomer or a dimer and forms supercomplexes (SCs) in the inner mitochondrial membrane with NADH-ubiquinone oxidoreductase (complex I, CI) and ubiquinol-cytochrome c oxidoreductase (cytochrome b-c1 complex, complex III, CIII), resulting in different assemblies (supercomplex SCI(1)III(2)IV(1) and megacomplex MCI(2)III(2)IV(2)). Found in a complex with TMEM177, COA6, COX18, COX20, SCO1 and SCO2. Interacts with TMEM177 in a COX20-dependent manner. Interacts with COX20. Interacts with COX16. Cu cation serves as cofactor.

It is found in the mitochondrion inner membrane. The catalysed reaction is 4 Fe(II)-[cytochrome c] + O2 + 8 H(+)(in) = 4 Fe(III)-[cytochrome c] + 2 H2O + 4 H(+)(out). Its function is as follows. Component of the cytochrome c oxidase, the last enzyme in the mitochondrial electron transport chain which drives oxidative phosphorylation. The respiratory chain contains 3 multisubunit complexes succinate dehydrogenase (complex II, CII), ubiquinol-cytochrome c oxidoreductase (cytochrome b-c1 complex, complex III, CIII) and cytochrome c oxidase (complex IV, CIV), that cooperate to transfer electrons derived from NADH and succinate to molecular oxygen, creating an electrochemical gradient over the inner membrane that drives transmembrane transport and the ATP synthase. Cytochrome c oxidase is the component of the respiratory chain that catalyzes the reduction of oxygen to water. Electrons originating from reduced cytochrome c in the intermembrane space (IMS) are transferred via the dinuclear copper A center (CU(A)) of subunit 2 and heme A of subunit 1 to the active site in subunit 1, a binuclear center (BNC) formed by heme A3 and copper B (CU(B)). The BNC reduces molecular oxygen to 2 water molecules using 4 electrons from cytochrome c in the IMS and 4 protons from the mitochondrial matrix. The polypeptide is Cytochrome c oxidase subunit 2 (MT-CO2) (Pelomedusa subrufa (African side-necked turtle)).